A 150-amino-acid polypeptide reads, in one-letter code: MKELKVSAINKGTVIDHIPSGKGLKVLEILNLPEDNTILVAINVKSQKLGRKDIIKVEGKILNEDEVNKIALIAPTATVNIIDKWEVVEKRNVEVPDEIVGIIKCANPNCITNYEEVKPKFKVISKKPLKLKCHYCERTMEENMVVKNLL.

Cysteine 105, cysteine 110, cysteine 133, and cysteine 136 together coordinate Zn(2+).

This sequence belongs to the PyrI family. In terms of assembly, contains catalytic and regulatory chains. The cofactor is Zn(2+).

Involved in allosteric regulation of aspartate carbamoyltransferase. The chain is Aspartate carbamoyltransferase regulatory chain from Thermococcus sibiricus (strain DSM 12597 / MM 739).